The chain runs to 671 residues: DNA ligase (671 aa).

NAD(+) is bound by residues 32 to 36 (DAEYD), 81 to 82 (SL), and Glu-113. The N6-AMP-lysine intermediate role is filled by Lys-115. 4 residues coordinate NAD(+): Arg-136, Glu-173, Lys-290, and Lys-314. 4 residues coordinate Zn(2+): Cys-408, Cys-411, Cys-426, and Cys-432. The 79-residue stretch at 593–671 (EIDSPFAGKT…ETEMLRLLGS (79 aa)) folds into the BRCT domain.

Belongs to the NAD-dependent DNA ligase family. LigA subfamily. Mg(2+) serves as cofactor. Requires Mn(2+) as cofactor.

It carries out the reaction NAD(+) + (deoxyribonucleotide)n-3'-hydroxyl + 5'-phospho-(deoxyribonucleotide)m = (deoxyribonucleotide)n+m + AMP + beta-nicotinamide D-nucleotide.. DNA ligase that catalyzes the formation of phosphodiester linkages between 5'-phosphoryl and 3'-hydroxyl groups in double-stranded DNA using NAD as a coenzyme and as the energy source for the reaction. It is essential for DNA replication and repair of damaged DNA. This chain is DNA ligase, found in Escherichia coli O81 (strain ED1a).